A 160-amino-acid polypeptide reads, in one-letter code: MEKDDLTHFNDEKRAKMVDVTSKSETKRRAIARATIHMNEETLARILAGKIAKGDVLAVAQVAGIMAAKKTSELIPMCHPIMTTKADISFEDDGKTELTITSEVVTVGKTGVEMEALTAVTIAALTIYDMCKAMDKGMRIEKTYLVEKTGGKSGTFKAEA.

Substrate-binding positions include 77-79 and 114-115; these read MCH and ME. Residue Asp129 is part of the active site.

It belongs to the MoaC family. Homohexamer; trimer of dimers.

It catalyses the reaction (8S)-3',8-cyclo-7,8-dihydroguanosine 5'-triphosphate = cyclic pyranopterin phosphate + diphosphate. Its pathway is cofactor biosynthesis; molybdopterin biosynthesis. Its function is as follows. Catalyzes the conversion of (8S)-3',8-cyclo-7,8-dihydroguanosine 5'-triphosphate to cyclic pyranopterin monophosphate (cPMP). The polypeptide is Cyclic pyranopterin monophosphate synthase (Listeria monocytogenes serotype 4a (strain HCC23)).